A 240-amino-acid chain; its full sequence is Thiamine-phosphate synthase (240 aa).

Residues 63–67 (QYREK) and asparagine 94 contribute to the 4-amino-2-methyl-5-(diphosphooxymethyl)pyrimidine site. Mg(2+) is bound by residues aspartate 95 and aspartate 114. Threonine 133 contributes to the 4-amino-2-methyl-5-(diphosphooxymethyl)pyrimidine binding site. 159 to 161 (TFT) is a 2-[(2R,5Z)-2-carboxy-4-methylthiazol-5(2H)-ylidene]ethyl phosphate binding site. Residue lysine 162 coordinates 4-amino-2-methyl-5-(diphosphooxymethyl)pyrimidine. Residues glycine 190 and 210–211 (IS) each bind 2-[(2R,5Z)-2-carboxy-4-methylthiazol-5(2H)-ylidene]ethyl phosphate.

It belongs to the thiamine-phosphate synthase family. Mg(2+) is required as a cofactor.

It catalyses the reaction 2-[(2R,5Z)-2-carboxy-4-methylthiazol-5(2H)-ylidene]ethyl phosphate + 4-amino-2-methyl-5-(diphosphooxymethyl)pyrimidine + 2 H(+) = thiamine phosphate + CO2 + diphosphate. It carries out the reaction 2-(2-carboxy-4-methylthiazol-5-yl)ethyl phosphate + 4-amino-2-methyl-5-(diphosphooxymethyl)pyrimidine + 2 H(+) = thiamine phosphate + CO2 + diphosphate. The enzyme catalyses 4-methyl-5-(2-phosphooxyethyl)-thiazole + 4-amino-2-methyl-5-(diphosphooxymethyl)pyrimidine + H(+) = thiamine phosphate + diphosphate. It functions in the pathway cofactor biosynthesis; thiamine diphosphate biosynthesis; thiamine phosphate from 4-amino-2-methyl-5-diphosphomethylpyrimidine and 4-methyl-5-(2-phosphoethyl)-thiazole: step 1/1. Functionally, condenses 4-methyl-5-(beta-hydroxyethyl)thiazole monophosphate (THZ-P) and 2-methyl-4-amino-5-hydroxymethyl pyrimidine pyrophosphate (HMP-PP) to form thiamine monophosphate (TMP). This chain is Thiamine-phosphate synthase, found in Methanosarcina mazei (strain ATCC BAA-159 / DSM 3647 / Goe1 / Go1 / JCM 11833 / OCM 88) (Methanosarcina frisia).